The primary structure comprises 419 residues: Tryptophan synthase beta chain (419 aa).

N6-(pyridoxal phosphate)lysine is present on K98.

Belongs to the TrpB family. In terms of assembly, tetramer of two alpha and two beta chains. Requires pyridoxal 5'-phosphate as cofactor.

It carries out the reaction (1S,2R)-1-C-(indol-3-yl)glycerol 3-phosphate + L-serine = D-glyceraldehyde 3-phosphate + L-tryptophan + H2O. It functions in the pathway amino-acid biosynthesis; L-tryptophan biosynthesis; L-tryptophan from chorismate: step 5/5. Its function is as follows. The beta subunit is responsible for the synthesis of L-tryptophan from indole and L-serine. This Ruegeria sp. (strain TM1040) (Silicibacter sp.) protein is Tryptophan synthase beta chain.